A 449-amino-acid polypeptide reads, in one-letter code: 23S rRNA (uracil(1939)-C(5))-methyltransferase RlmD (449 aa).

A TRAM domain is found at 12–70 (SKQLSAKQSFSVHQLDHLGAGIAQHQGKVVFIPGALPSETVQAQLTEQKKNYARAKLIK). [4Fe-4S] cluster-binding residues include cysteine 83, cysteine 89, cysteine 92, and cysteine 170. The S-adenosyl-L-methionine site is built by glutamine 282, phenylalanine 311, asparagine 316, glutamate 332, aspartate 359, and aspartate 379. Cysteine 405 functions as the Nucleophile in the catalytic mechanism.

It belongs to the class I-like SAM-binding methyltransferase superfamily. RNA M5U methyltransferase family. RlmD subfamily.

It catalyses the reaction uridine(1939) in 23S rRNA + S-adenosyl-L-methionine = 5-methyluridine(1939) in 23S rRNA + S-adenosyl-L-homocysteine + H(+). Functionally, catalyzes the formation of 5-methyl-uridine at position 1939 (m5U1939) in 23S rRNA. In Shewanella sp. (strain MR-4), this protein is 23S rRNA (uracil(1939)-C(5))-methyltransferase RlmD.